Reading from the N-terminus, the 279-residue chain is Zinc-finger homeodomain protein 1 (279 aa).

Over residues 1–13 (MDFDDHDDGDEEM) the composition is skewed to acidic residues. The tract at residues 1–47 (MDFDDHDDGDEEMPPMPVSSSYETPPQHGLAGGGMAPKPPGEIGSHV) is disordered. The ZF-HD dimerization-type; degenerate zinc-finger motif lies at 57 to 106 (YRECLKNHAVGIGGHAVDGCGEFMAAGEEGTIDALRCAACNCHRNFHRKE). Residues 157 to 191 (AAAAAAGGHPQRPLALPSTSHSGRDDGDDLSGMVG) are disordered. A DNA-binding region (homeobox) is located at residues 215 to 278 (KKRFRTKFTQ…NNKHTLGKKL (64 aa)).

As to quaternary structure, homo- and heterodimer with other ZFHD proteins.

The protein resides in the nucleus. In terms of biological role, putative transcription factor. The protein is Zinc-finger homeodomain protein 1 (ZHD1) of Oryza sativa subsp. indica (Rice).